Here is a 442-residue protein sequence, read N- to C-terminus: ATP-dependent protease ATPase subunit HslU (442 aa).

ATP contacts are provided by residues I18, 60-65 (GVGKTE), D255, E320, and R392.

It belongs to the ClpX chaperone family. HslU subfamily. As to quaternary structure, a double ring-shaped homohexamer of HslV is capped on each side by a ring-shaped HslU homohexamer. The assembly of the HslU/HslV complex is dependent on binding of ATP.

It localises to the cytoplasm. Functionally, ATPase subunit of a proteasome-like degradation complex; this subunit has chaperone activity. The binding of ATP and its subsequent hydrolysis by HslU are essential for unfolding of protein substrates subsequently hydrolyzed by HslV. HslU recognizes the N-terminal part of its protein substrates and unfolds these before they are guided to HslV for hydrolysis. In Shewanella putrefaciens (strain CN-32 / ATCC BAA-453), this protein is ATP-dependent protease ATPase subunit HslU.